Consider the following 393-residue polypeptide: DNA/RNA-binding protein KIN17 (393 aa).

The C2H2-type zinc-finger motif lies at 28-50 (CQMCQKQCRDENGFKCHCMSESH). A winged helix-turn-helix (wHTH) region spans residues 51-160 (QRQLLLASEN…RQLELEKKKK (110 aa)). The residue at position 135 (Lys-135) is an N6,N6,N6-trimethyllysine; by METTL22; in vitro. At Lys-135 the chain carries N6-methyllysine. Positions 147 to 180 (ETIRRQLELEKKKKQDLDDEEKTAKFIEEQVRRG) form a coiled coil. A compositionally biased stretch (low complexity) spans 209-224 (KGACSSSGATSSKSST). The interval 209–260 (KGACSSSGATSSKSSTLGPSALKTIGSSASVKRKESSQSSTQSKEKKKKKSA) is disordered. A coiled-coil region spans residues 250-277 (QSKEKKKKKSALDEIMEIEEEKKRTART). The tract at residues 284-334 (EIIVKIITKKLGEKYHKKKAIVKEVIDKYTAVVKMIDSGDKLKLDQTHLET) is C-terminal subdomain A. The interval 340–391 (GKRILVLNGGYRGNEGTLESINEKTFSATIVIETGPLKGRRVEGIQYEDISK) is C-terminal subdomain B.

The protein belongs to the KIN17 family. In terms of assembly, associated with DNA polymerase alpha, RFC1 and cyclin A, in multiprotein DNA replication complexes. Also associates with replication origins at the G1/S phase boundary and throughout the S phase in vivo. As to quaternary structure, (Microbial infection) Interacts with SV40 large T antigen. In terms of tissue distribution, ubiquitously expressed in all tissues examined, with highest levels in skeletal muscle, heart and testis. Differentially expressed in non-tumorigenic and tumorigenic cell lines. Highly expressed in proliferating epithelial keratinocyte cells in vitro (at protein level).

The protein localises to the nucleus. It localises to the cytoplasm. Its function is as follows. Involved in DNA replication and the cellular response to DNA damage. May participate in DNA replication factories and create a bridge between DNA replication and repair mediated by high molecular weight complexes. May play a role in illegitimate recombination and regulation of gene expression. May participate in mRNA processing. Binds, in vitro, to double-stranded DNA. Also shown to bind preferentially to curved DNA in vitro and in vivo. Binds via its C-terminal domain to RNA in vitro. This Homo sapiens (Human) protein is DNA/RNA-binding protein KIN17.